The sequence spans 384 residues: S-adenosylmethionine synthase (384 aa).

His-15 provides a ligand contact to ATP. Asp-17 lines the Mg(2+) pocket. Residue Glu-43 coordinates K(+). L-methionine-binding residues include Glu-56 and Gln-99. Residues 99–109 (QSPDINQGVDR) form a flexible loop region. ATP-binding positions include 164-166 (DAK), 230-231 (RF), Asp-239, 245-246 (RK), Ala-262, and Lys-266. Asp-239 contacts L-methionine. Lys-270 is an L-methionine binding site.

The protein belongs to the AdoMet synthase family. Homotetramer; dimer of dimers. Mg(2+) is required as a cofactor. The cofactor is K(+).

It localises to the cytoplasm. The catalysed reaction is L-methionine + ATP + H2O = S-adenosyl-L-methionine + phosphate + diphosphate. It participates in amino-acid biosynthesis; S-adenosyl-L-methionine biosynthesis; S-adenosyl-L-methionine from L-methionine: step 1/1. Its function is as follows. Catalyzes the formation of S-adenosylmethionine (AdoMet) from methionine and ATP. The overall synthetic reaction is composed of two sequential steps, AdoMet formation and the subsequent tripolyphosphate hydrolysis which occurs prior to release of AdoMet from the enzyme. In Salmonella agona (strain SL483), this protein is S-adenosylmethionine synthase.